Here is a 147-residue protein sequence, read N- to C-terminus: Large ribosomal subunit protein uL16 (147 aa).

Belongs to the universal ribosomal protein uL16 family. In terms of assembly, part of the 50S ribosomal subunit.

Functionally, binds 23S rRNA and is also seen to make contacts with the A and possibly P site tRNAs. This Lactobacillus delbrueckii subsp. bulgaricus (strain ATCC 11842 / DSM 20081 / BCRC 10696 / JCM 1002 / NBRC 13953 / NCIMB 11778 / NCTC 12712 / WDCM 00102 / Lb 14) protein is Large ribosomal subunit protein uL16.